The primary structure comprises 2223 residues: Protein Ycf2 (2223 aa).

Position 1576–1583 (1576–1583 (GSIGTGRS)) interacts with ATP.

This sequence belongs to the Ycf2 family.

The protein localises to the plastid. It is found in the chloroplast stroma. Functionally, probable ATPase of unknown function. Its presence in a non-photosynthetic plant (Epifagus virginiana) and experiments in tobacco indicate that it has an essential function which is probably not related to photosynthesis. In Silene latifolia (White campion), this protein is Protein Ycf2.